The primary structure comprises 1074 residues: BRD4-interacting chromatin-remodeling complex-associated protein-like (1074 aa).

Disordered regions lie at residues 542–603, 620–689, 834–874, and 887–952; these read AVSS…NTPG, TSPI…GQKR, TPLD…HDQF, and GNIS…SKLP. 4 stretches are compositionally biased toward polar residues: residues 544 to 576, 591 to 603, 620 to 629, and 660 to 680; these read SSASTAHPTLGPTVQSGAPGSNFTGDQLTQANR, ASKSPSTLSNTPG, TSPIPTSKTT, and GATQAQPESSVGSSPSQTAVQ. The residue at position 621 (S621) is a Phosphoserine. 3 stretches are compositionally biased toward basic and acidic residues: residues 889-904, 913-925, and 934-948; these read ISKKSEGHSRTLKFDR, PPEDKGGRRDPAK, and EGHRKSLPRPDHGSE. S976 carries the phosphoserine modification.

In terms of assembly, component of the multiprotein chromatin-remodeling complexes SWI/SNF: SWI/SNF-A (BAF), SWI/SNF-B (PBAF) and related complexes. The canonical complex contains a catalytic subunit (either SMARCA4/BRG1/BAF190A or SMARCA2/BRM/BAF190B) and at least SMARCE1, ACTL6A/BAF53, SMARCC1/BAF155, SMARCC2/BAF170, and SMARCB1/SNF5/BAF47. Other subunits specific to each of the complexes may also be present permitting several possible combinations developmentally and tissue specific. Component of the SWI/SNF (GBAF) subcomplex, which includes at least BICRA or BICRAL (mutually exclusive), BRD9, SS18, the core BAF subunits, SMARCA2/BRM, SMARCA4/BRG1/BAF190A, ACTL6A/BAF53, SMARCC1/BAF155, and SMARCD1/BAF60A.

Its function is as follows. Component of SWI/SNF chromatin remodeling subcomplex GBAF that carries out key enzymatic activities, changing chromatin structure by altering DNA-histone contacts within a nucleosome in an ATP-dependent manner. This Mus musculus (Mouse) protein is BRD4-interacting chromatin-remodeling complex-associated protein-like.